The primary structure comprises 195 residues: ATP-dependent Clp protease proteolytic subunit (195 aa).

Residue Ser99 is the Nucleophile of the active site. His124 is a catalytic residue.

The protein belongs to the peptidase S14 family. Fourteen ClpP subunits assemble into 2 heptameric rings which stack back to back to give a disk-like structure with a central cavity, resembling the structure of eukaryotic proteasomes.

The protein resides in the cytoplasm. It carries out the reaction Hydrolysis of proteins to small peptides in the presence of ATP and magnesium. alpha-casein is the usual test substrate. In the absence of ATP, only oligopeptides shorter than five residues are hydrolyzed (such as succinyl-Leu-Tyr-|-NHMec, and Leu-Tyr-Leu-|-Tyr-Trp, in which cleavage of the -Tyr-|-Leu- and -Tyr-|-Trp bonds also occurs).. Functionally, cleaves peptides in various proteins in a process that requires ATP hydrolysis. Has a chymotrypsin-like activity. Plays a major role in the degradation of misfolded proteins. This is ATP-dependent Clp protease proteolytic subunit from Desulforamulus reducens (strain ATCC BAA-1160 / DSM 100696 / MI-1) (Desulfotomaculum reducens).